A 1022-amino-acid polypeptide reads, in one-letter code: Dihydropyrimidine dehydrogenase [NADP(+)] (1022 aa).

The tract at residues 26 to 45 is disordered; it reads ANVHSTASKKNEKKHWKRNP. One can recognise a 4Fe-4S ferredoxin-type 1 domain in the interval 69-100; that stretch reads ERGALREALRCLKCADAPCQKSCPTNLDIKSF. Positions 79, 82, 87, and 91 each coordinate [4Fe-4S] cluster. An FAD-binding site is contributed by Val-129. Residues Cys-130, Cys-136, Cys-140, and Gln-156 each contribute to the [4Fe-4S] cluster site. Residues 194 to 198, 218 to 226, Arg-235, and Leu-261 contribute to the FAD site; these read GCGPA and EKQKYIGGL. Residues 340-343, 364-365, Arg-371, 437-439, and 481-487 each bind NADP(+); these read AGDT, RK, AFG, and DIAGFAN. FAD is bound at residue 480–489; sequence GDIAGFANTT. Residues Ser-550 and 574-575 contribute to the FMN site; that span reads KT. Residues Asn-609 and 668-670 contribute to the substrate site; that span reads NLS. Cys-671 serves as the catalytic Proton acceptor. Residue Lys-709 coordinates FMN. 736–737 contacts substrate; it reads NT. FMN is bound by residues Gly-767, 793–795, and 816–817; these read TGG and CS. 2 consecutive 4Fe-4S ferredoxin-type domains span residues 943-975 and 976-1006; these read VQAL…FDPE and THLP…MVSR. Positions 952, 955, 958, 962, 985, 988, 991, and 995 each coordinate [4Fe-4S] cluster.

This sequence belongs to the dihydropyrimidine dehydrogenase family. Homodimer. It depends on FAD as a cofactor. Requires FMN as cofactor. The cofactor is [4Fe-4S] cluster.

It is found in the cytoplasm. It catalyses the reaction 5,6-dihydrouracil + NADP(+) = uracil + NADPH + H(+). The catalysed reaction is 5,6-dihydrothymine + NADP(+) = thymine + NADPH + H(+). It functions in the pathway amino-acid biosynthesis; beta-alanine biosynthesis. Involved in pyrimidine base degradation. Catalyzes the reduction of uracil and thymine. Also involved the degradation of the chemotherapeutic drug 5-fluorouracil. This Danio rerio (Zebrafish) protein is Dihydropyrimidine dehydrogenase [NADP(+)] (dpyd).